A 942-amino-acid polypeptide reads, in one-letter code: UvrABC system protein A (942 aa).

32–39 is an ATP binding site; sequence GLSGSGKS. The C4-type zinc-finger motif lies at 251–278; the sequence is CPVCGFTVPELEPRLFSFNAPFGSCPTC. 2 ABC transporter domains span residues 308-589 and 609-937; these read WNPI…KKSI and GNGR…HYLK. 641–648 contacts ATP; it reads GVSGSGKS. A C4-type zinc finger spans residues 740-766; sequence CEACSGDGIIKIEMHFLPDVYVPCEVC.

Belongs to the ABC transporter superfamily. UvrA family. As to quaternary structure, forms a heterotetramer with UvrB during the search for lesions.

It is found in the cytoplasm. The UvrABC repair system catalyzes the recognition and processing of DNA lesions. UvrA is an ATPase and a DNA-binding protein. A damage recognition complex composed of 2 UvrA and 2 UvrB subunits scans DNA for abnormalities. When the presence of a lesion has been verified by UvrB, the UvrA molecules dissociate. The protein is UvrABC system protein A of Streptococcus pyogenes serotype M18 (strain MGAS8232).